A 586-amino-acid chain; its full sequence is MASKKREVQLQSVVNSQNLWDEMLLNKGLTVIDVYQAWCGPCKAVQSLFRKLKNELNEDEILHFVVAEADNIVTLQPFRDKCEPVFLFSLNGKIIAKIQGANAPLINRKVITLIDEERKIVAGEMDRPQYVEIPLVDAIDEEYGEVQYESAAEVYNMAIIKPDAVLMRKNIEVREKIAKEGFVIEIQENLILPEEVVREFYTHIADQPDFEEFVVSMTNGLSCVLIVSQEDSEVIQEETLPQTDTEEEPGVLEEPHVRFAPVMIKKKRDSLQEYMDRQHMSDYCDVEDDAVKVSKLIDILFPDFKTMKSTNVQTTLALLHPDICEEEKDDVLNVIHNEGFTILMQRQIVLSEEEARTVCKIHENEEYFDNLIGHMTSNHSYVLALRRENGVEYWKTLIGPKTIEEAYASHPQSLCVQFASGNFPTNQFYGSSSKAAAEKEIAHFFPPQSTLALIKPHVTHKERMEILKTIKEAGFELTLMKEMHLTPEHANKIYFKITGKDFYKNVLEVLSLGMSLVMVLTKWNAVAEWRRMVGPVDPEEAKLLSPESLRAKYGLDILRNAVHGASNFSEASEIISNVFTEGNPEN.

Residues 10–116 (LQSVVNSQNL…NRKVITLIDE (107 aa)) form the Thioredoxin domain. A disulfide bridge connects residues C39 and C42. 3 NDK regions span residues 157-254 (MAII…VLEE), 312-452 (VQTT…STLA), and 453-586 (LIKP…NPEN).

It in the C-terminal section; belongs to the NDK family. Monomer. As to expression, testis-specific. Expressed mainly in round spermatids.

Its subcellular location is the cytoplasm. In terms of biological role, probably required during the final stages of sperm tail maturation in the testis and/or epididymis, where extensive disulfide bonding of fibrous sheath (FS) proteins occurs. In vitro, it has neither nucleoside diphosphate kinase (NDPK) activity nor reducing activity on disulfide bonds. Exhibits a 3'-5' exonuclease activity with a preference for single-stranded DNA, suggesting roles in DNA proofreading and repair. In Mus musculus (Mouse), this protein is Thioredoxin domain-containing protein 3 (Nme8).